Reading from the N-terminus, the 317-residue chain is Apolipoprotein E (317 aa).

Positions 1–18 are cleaved as a signal peptide; it reads MKVLWAALLVTFLAGCQA. 8 tandem repeats follow at residues 80 to 101, 102 to 123, 124 to 145, 146 to 167, 168 to 189, 190 to 211, 212 to 233, and 234 to 255. The interval 80-255 is 8 X 22 AA approximate tandem repeats; it reads ALMDETMKEL…RLDEVKEQVA (176 aa). At M143 the chain carries Methionine sulfoxide. At S147 the chain carries Phosphoserine. The LDL and other lipoprotein receptors binding stretch occupies residues 158–168; that stretch reads HLRKLRKRLLR. 162–165 is a binding site for heparin; sequence LRKR. A lipid-binding and lipoprotein association region spans residues 210-290; it reads AATVGSLAGQ…SWFEPLVEDM (81 aa). 229 to 236 contributes to the heparin binding site; that stretch reads GERLRARM. The segment at 266–317 is homooligomerization; it reads QQIRLQAEAFQARLKSWFEPLVEDMQRQWAGLVEKVQAAMGTSAAPVPSDNH. The segment at 278-290 is specificity for association with VLDL; that stretch reads RLKSWFEPLVEDM.

It belongs to the apolipoprotein A1/A4/E family. Homotetramer. May interact with ABCA1; functionally associated with ABCA1 in the biogenesis of HDLs. May interact with APP/A4 amyloid-beta peptide; the interaction is extremely stable in vitro but its physiological significance is unclear. May interact with MAPT. May interact with MAP2. In the cerebrospinal fluid, interacts with secreted SORL1. Interacts with PMEL; this allows the loading of PMEL luminal fragment on ILVs to induce fibril nucleation. Post-translationally, APOE exists as multiple glycosylated and sialylated glycoforms within cells and in plasma. The extent of glycosylation and sialylation are tissue and context specific. In terms of processing, glycated in plasma VLDL. Phosphorylated by FAM20C in the extracellular medium.

It localises to the secreted. The protein resides in the extracellular space. The protein localises to the extracellular matrix. It is found in the extracellular vesicle. Its subcellular location is the endosome. It localises to the multivesicular body. APOE is an apolipoprotein, a protein associating with lipid particles, that mainly functions in lipoprotein-mediated lipid transport between organs via the plasma and interstitial fluids. APOE is a core component of plasma lipoproteins and is involved in their production, conversion and clearance. Apolipoproteins are amphipathic molecules that interact both with lipids of the lipoprotein particle core and the aqueous environment of the plasma. As such, APOE associates with chylomicrons, chylomicron remnants, very low density lipoproteins (VLDL) and intermediate density lipoproteins (IDL) but shows a preferential binding to high-density lipoproteins (HDL). It also binds a wide range of cellular receptors including the LDL receptor/LDLR, the LDL receptor-related proteins LRP1, LRP2 and LRP8 and the very low-density lipoprotein receptor/VLDLR that mediate the cellular uptake of the APOE-containing lipoprotein particles. Finally, APOE also has a heparin-binding activity and binds heparan-sulfate proteoglycans on the surface of cells, a property that supports the capture and the receptor-mediated uptake of APOE-containing lipoproteins by cells. A main function of APOE is to mediate lipoprotein clearance through the uptake of chylomicrons, VLDLs, and HDLs by hepatocytes. APOE is also involved in the biosynthesis by the liver of VLDLs as well as their uptake by peripheral tissues ensuring the delivery of triglycerides and energy storage in muscle, heart and adipose tissues. By participating in the lipoprotein-mediated distribution of lipids among tissues, APOE plays a critical role in plasma and tissues lipid homeostasis. APOE is also involved in two steps of reverse cholesterol transport, the HDLs-mediated transport of cholesterol from peripheral tissues to the liver, and thereby plays an important role in cholesterol homeostasis. First, it is functionally associated with ABCA1 in the biogenesis of HDLs in tissues. Second, it is enriched in circulating HDLs and mediates their uptake by hepatocytes. APOE also plays an important role in lipid transport in the central nervous system, regulating neuron survival and sprouting. This chain is Apolipoprotein E (APOE), found in Pan troglodytes (Chimpanzee).